The chain runs to 407 residues: Na(+)-translocating NADH-quinone reductase subunit F (407 aa).

Residues 3-23 (IILGVVMFTLIVLALVLVILF) traverse the membrane as a helical segment. In terms of domain architecture, 2Fe-2S ferredoxin-type spans 32-126 (GDITISVNGD…DMDIELPEEI (95 aa)). [2Fe-2S] cluster-binding residues include Cys-69, Cys-75, Cys-78, and Cys-110. Residues 129–269 (VKKWECTVIS…SGPFGEFFAK (141 aa)) enclose the FAD-binding FR-type domain. Residues 272–389 (DAEMVFIGGG…PMMNAAVIGM (118 aa)) form a catalytic region.

It belongs to the NqrF family. Composed of six subunits; NqrA, NqrB, NqrC, NqrD, NqrE and NqrF. [2Fe-2S] cluster is required as a cofactor. Requires FAD as cofactor.

It is found in the cell inner membrane. It carries out the reaction a ubiquinone + n Na(+)(in) + NADH + H(+) = a ubiquinol + n Na(+)(out) + NAD(+). Its function is as follows. NQR complex catalyzes the reduction of ubiquinone-1 to ubiquinol by two successive reactions, coupled with the transport of Na(+) ions from the cytoplasm to the periplasm. The first step is catalyzed by NqrF, which accepts electrons from NADH and reduces ubiquinone-1 to ubisemiquinone by a one-electron transfer pathway. The chain is Na(+)-translocating NADH-quinone reductase subunit F from Vibrio parahaemolyticus serotype O3:K6 (strain RIMD 2210633).